Here is a 475-residue protein sequence, read N- to C-terminus: Alpha,alpha-trehalose-phosphate synthase [UDP-forming] (475 aa).

D-glucose 6-phosphate-binding residues include tyrosine 93 and aspartate 147. UDP contacts are provided by arginine 285 and lysine 290. Residues arginine 285 and lysine 290 each coordinate UDP-alpha-D-glucose. Arginine 323 lines the D-glucose 6-phosphate pocket. 384-392 (DGMNLVSYE) provides a ligand contact to UDP-alpha-D-glucose. 388–392 (LVSYE) contributes to the UDP binding site.

The protein belongs to the glycosyltransferase 20 family.

It carries out the reaction D-glucose 6-phosphate + UDP-alpha-D-glucose = alpha,alpha-trehalose 6-phosphate + UDP + H(+). The protein operates within carbohydrate biosynthesis. Its function is as follows. Synthase catalytic subunit of the trehalose synthase complex that catalyzes the production of trehalose from glucose-6-phosphate and UDP-alpha-D-glucose in a two step process. This is Alpha,alpha-trehalose-phosphate synthase [UDP-forming] from Pichia angusta (Yeast).